Consider the following 247-residue polypeptide: MKMIISPAKQMVSDDEPLVRPTPIRFPAQVTELMADLKSRTPAELQELWRCSDKLARENVARVQAFDLKRVGTPAVFAYAGIQYQSLGAGVLTDRGLQNLGQRLYILSGLYGLLGAFDGILPYRLEMGAKGEIAGAKNLYQYWGARLYQALFASGDLVVNLASKEYSKAITPYLTPADRWVTVLFKQEKNGRLVQQATAAKKARGSLVRYLALENEPTLATIKAFTVGGYRYRADLSTEAEYVFVKD.

It belongs to the UPF0246 family.

The sequence is that of UPF0246 protein LAF_1150 from Limosilactobacillus fermentum (strain NBRC 3956 / LMG 18251) (Lactobacillus fermentum).